An 88-amino-acid chain; its full sequence is Small ribosomal subunit protein bS16 (88 aa).

Belongs to the bacterial ribosomal protein bS16 family.

This chain is Small ribosomal subunit protein bS16, found in Thermus aquaticus.